We begin with the raw amino-acid sequence, 1544 residues long: GATOR complex protein Iml1 (1544 aa).

2 disordered regions span residues 615-649 (QAVPAKPTQAGQQRPLQQTQSNNNNDQEDYGCENG) and 1037-1072 (RRHSTSIISRPQPNQGLTNSPFRERVGSNRLPEKRP). Composition is skewed to polar residues over residues 623–639 (QAGQQRPLQQTQSNNNN) and 1041–1057 (TSIISRPQPNQGLTNSP). Residues 1058-1072 (FRERVGSNRLPEKRP) show a composition bias toward basic and acidic residues.

The protein belongs to the IML1 family. In terms of assembly, component of the GATOR complex consisting of mio, Nup44A/Seh1, Im11, Nplr3, Nplr2, Wdr24, Wdr59 and Sec13. Within the GATOR complex, probable component of the GATOR1 subcomplex which is likely composed of Iml1, Nplr2 and Nplr3.

An essential component of the GATOR subcomplex GATOR1 which functions as an inhibitor of the amino acid-sensing branch of the TORC1 signaling pathway. The two GATOR subcomplexes, GATOR1 and GATOR2, regulate the TORC1 pathway in order to mediate metabolic homeostasis, female gametogenesis and the response to amino acid limitation and complete starvation. The function of GATOR1 in negatively regulating the TORC1 pathway is essential for maintaining baseline levels of TORC1 activity under nutrient rich conditions, and for promoting survival during amino acid or complete starvation by inhibiting TORC1-dependent cell growth and promoting catabolic metabolism and autophagy. GATOR1 and GATOR2 act at different stages of oogenesis to regulate TORC1 in order to control meiotic entry and promote oocyte growth and development. After exactly four mitotic cyst divisions, the GATOR1 complex members (Iml1, Nprl2 and Nprl3) down-regulate TORC1 to slow cellular metabolism and promote the mitotic/meiotic transition. At later stages of oogenesis, the mio and Nup44A components of the GATOR2 complex inhibit GATOR1 and thus activate TORC1 to promote meiotic progression, and drive oocyte growth and development. This Drosophila melanogaster (Fruit fly) protein is GATOR complex protein Iml1.